We begin with the raw amino-acid sequence, 158 residues long: Secreted RxLR effector protein 131 (158 aa).

The N-terminal stretch at 1–20 (MRQIPLVVVLLLAYAARLQG) is a signal peptide. Positions 39–57 (RDLDGSTTSMSVNVDDEER) match the RxLR-dEER motif. The segment at 120–158 (KGNVKYLAIIYVICILSVLGILGTVFAINRNISNQYIHE) is host BKI1-binding. Residues 127–147 (AIIYVICILSVLGILGTVFAI) traverse the membrane as a helical segment. Asn150 is a glycosylation site (N-linked (GlcNAc...) asparagine).

It belongs to the RxLR effector family. Interacts with host BKI1.

It localises to the secreted. The protein localises to the host cell membrane. Its function is as follows. Secreted effector that suppresses pathogen-associated molecular pattern (PAMP)-triggered immunity (PTI) in host plants. Suppresses both defense-related brassinosteroid (BR) and ERECTA (ER) signaling pathways in planta by interacting with host BRI1 kinase inhibitor 1 (BKI1) at the host plasma membrane, leading to a host dwarf phenotype. This is Secreted RxLR effector protein 131 from Plasmopara viticola (Downy mildew of grapevine).